A 468-amino-acid chain; its full sequence is MDASVDKILAGKYPAKHHAKRVAARIRELGHGEAGVIYLESQKTRMIEDNDGEMPFRQRRNFFYLSGCPLPDSYLTYNIEEDHLTLFIPPIDEDSVIWSGLPLSPDEALELYDVDAVLSTADVNASLAHYCSAKEGTKVFAISDQVSPHITFLPFQETDFDVLKRAAEEARVVKDDYEIALLRRANEISSKAHVAVIKAAKSAMNERELEATFIATCMSYGCREQSYHPIFAGGTNGATLHYQKNDQDLVDKTTGEKKLNMLVDAGGEYRNYCADITRVFPLSGKFSAESRQIYDIVLEMQMTSLAMIKAGVMWEDVHSNSHRVAIRGLLKLGILRGTEQELFDKGISVAFFPHGLGHYLGMDTHDTGGNPNYEDKDSKFKYLRLRGVLACGGVVTVEPGLYFCRFIIDPYLASPELGKYIDANVLEKYWSVGGVRLEDNVVVTQNGYDNLTTAPKIPEEIEKLAAGP.

Mn(2+) contacts are provided by D264, D275, E398, and E438.

Belongs to the peptidase M24B family. Mn(2+) is required as a cofactor.

It catalyses the reaction Release of any N-terminal amino acid, including proline, that is linked to proline, even from a dipeptide or tripeptide.. Catalyzes the removal of a penultimate prolyl residue from the N-termini of peptides. This Ajellomyces dermatitidis (strain ER-3 / ATCC MYA-2586) (Blastomyces dermatitidis) protein is Probable Xaa-Pro aminopeptidase PEPP (PEPP).